The chain runs to 218 residues: Ras-related protein Rab-27B (218 aa).

The residue at position 2 (Thr2) is an N-acetylthreonine. Residue 16-24 (GDSGVGKTT) coordinates GTP. An Effector region motif is present at residues 38-46 (FITTVGIDF). Residues 74–78 (DTAGQ), 133–136 (NKAD), and 163–165 (SAA) each bind GTP. A disulfide bridge connects residues Cys123 and Cys188. Residues Cys216 and Cys218 are each lipidated (S-geranylgeranyl cysteine). A Cysteine methyl ester modification is found at Cys218.

Belongs to the small GTPase superfamily. Rab family. As to quaternary structure, interacts with SYTL2, SYTL4, MYRIP and MLPH. Interacts with RPH3A and RPH3A. Interacts (GDP-bound form preferentially) with DENND10.

It is found in the membrane. Its subcellular location is the late endosome. The enzyme catalyses GTP + H2O = GDP + phosphate + H(+). Its activity is regulated as follows. Regulated by guanine nucleotide exchange factors (GEFs) which promote the exchange of bound GDP for free GTP, GTPase activating proteins (GAPs) which increase the GTP hydrolysis activity, and GDP dissociation inhibitors which inhibit the dissociation of the nucleotide from the GTPase. Activated by GEFs such as DENND10. Functionally, small GTPase which cycles between active GTP-bound and inactive GDP-bound states. In its active state, binds to a variety of effector proteins to regulate homeostasis of late endocytic pathway, including endosomal positioning, maturation and secretion. Plays a role in NTRK2/TRKB axonal anterograde transport by facilitating the association of NTRK2/TRKB with KLC1. May be involved in targeting uroplakins to urothelial apical membranes. The protein is Ras-related protein Rab-27B (Rab27b) of Rattus norvegicus (Rat).